Here is a 245-residue protein sequence, read N- to C-terminus: Adenosylcobinamide-GDP ribazoletransferase (245 aa).

5 helical membrane passes run 31-51 (LLHY…AALL), 57-77 (PLLQ…ALHL), 109-129 (VAVV…LVVL), 134-154 (PAAL…LFLC), and 176-196 (ALMV…TGLL).

This sequence belongs to the CobS family. The cofactor is Mg(2+).

Its subcellular location is the cell inner membrane. The enzyme catalyses alpha-ribazole + adenosylcob(III)inamide-GDP = adenosylcob(III)alamin + GMP + H(+). It catalyses the reaction alpha-ribazole 5'-phosphate + adenosylcob(III)inamide-GDP = adenosylcob(III)alamin 5'-phosphate + GMP + H(+). Its pathway is cofactor biosynthesis; adenosylcobalamin biosynthesis; adenosylcobalamin from cob(II)yrinate a,c-diamide: step 7/7. In terms of biological role, joins adenosylcobinamide-GDP and alpha-ribazole to generate adenosylcobalamin (Ado-cobalamin). Also synthesizes adenosylcobalamin 5'-phosphate from adenosylcobinamide-GDP and alpha-ribazole 5'-phosphate. This Stutzerimonas stutzeri (strain A1501) (Pseudomonas stutzeri) protein is Adenosylcobinamide-GDP ribazoletransferase.